Here is a 233-residue protein sequence, read N- to C-terminus: Movement and silencing protein TGBp1 (233 aa).

The (+)RNA virus helicase ATP-binding domain occupies 1–133 (MNHFINLLVA…CKLLSSLGIK (133 aa)). The 100-residue stretch at 134-233 (VESHRRDRDV…EFPHTTSRPQ (100 aa)) folds into the (+)RNA virus helicase C-terminal domain.

It belongs to the Tymovirales TGBp1 protein family. In terms of assembly, homodimer and homooligomer. Interacts with capsid protein. Interacts with host AGO1; this interaction targets the host protein for degradation, thereby suppressing the antiviral RNA silencing.

The protein resides in the host cytoplasm. In terms of biological role, transports viral genome to neighboring plant cells directly through plasmosdesmata, without any budding. The movement protein allows efficient cell to cell propagation, by bypassing the host cell wall barrier. Increases plasmodesma size exclusion limit. Acts as a suppressor of RNA-mediated gene silencing, also known as post-transcriptional gene silencing (PTGS), a mechanism of plant viral defense that limits the accumulation of viral RNAs. The protein is Movement and silencing protein TGBp1 of Carica papaya (Papaya).